The chain runs to 477 residues: MSGTYDDSVGVEVSSDSFWEVGNYKRTVKRIDDGHRLCNDLMNCIHERARIEKVYAQQLTEWAKRWKQLVERGPQYGTVEKAWHNLMTEAEKVSELHLEVKNALMNEDFEKIKNWQKEAFHKQMMGGFKETKEADDGFRKAQKPWAKKLKEVEAAKKSYHAACKEEKLATSRETNSKADPAMNPEQLKKLQDKVEKSKQDSQKTKEKYEKSLKDLDGTTPQYMENMEQVFEQCQQFEDKRLSFFREVLLEVEKHLDLSNVESYASIYRELEYAIKSADAMEDLKWFRNNHGPGMSMNWPQFEDWSADLNRTLSRREKKKPTDGVTLTGISQSGEQSSIQNQHSSHLSVQSAQSTNNPFEDEEETVSINETENKKIENVGSYEKTHPAEWSDDESNNPFNPSDTNGDNNPFDEDALTTLEVRVRALYDYDGQELDELSFKAGEELTKIEDEDEQGWCKGRLEGGQVGLYPANYVESVQ.

Residues 11–282 form the F-BAR domain; it reads VEVSSDSFWE…AIKSADAMED (272 aa). Residues 25 to 274 adopt a coiled-coil conformation; it reads KRTVKRIDDG…SIYRELEYAI (250 aa). Composition is skewed to basic and acidic residues over residues 163 to 176 and 186 to 216; these read CKEE…ETNS and QLKK…KDLD. 2 disordered regions span residues 163–218 and 314–412; these read CKEE…LDGT and RREK…PFDE. Residues 328–341 are compositionally biased toward low complexity; sequence GISQSGEQSSIQNQ. The segment covering 342–357 has biased composition (polar residues); it reads HSSHLSVQSAQSTNNP. An NPF1 motif is present at residues 356 to 358; it reads NPF. Positions 370-388 are enriched in basic and acidic residues; the sequence is TENKKIENVGSYEKTHPAE. Over residues 395-407 the composition is skewed to polar residues; the sequence is NNPFNPSDTNGDN. The short motif at 396 to 398 is the NPF2 element; sequence NPF. The short motif at 408 to 410 is the NPF3 element; the sequence is NPF. Positions 417-477 constitute an SH3 domain; the sequence is TLEVRVRALY…YPANYVESVQ (61 aa).

Belongs to the PACSIN family. In terms of assembly, interacts with adam13 through the SH3 domains. In terms of processing, phosphorylated. Ubiquitously expressed with higher expression in the ectoderm, the neuroectoderm, and dorsal mesoderm layers.

Its subcellular location is the cytoplasm. The protein localises to the cytoskeleton. It is found in the cytoplasmic vesicle membrane. The protein resides in the cell projection. It localises to the ruffle membrane. Its subcellular location is the early endosome. The protein localises to the recycling endosome membrane. It is found in the cell membrane. The protein resides in the membrane. It localises to the caveola. Its subcellular location is the cell junction. The protein localises to the adherens junction. In terms of biological role, regulates the morphogenesis and endocytosis of caveolae. Lipid-binding protein that is able to promote the tubulation of the phosphatidic acid-containing membranes it preferentially binds. Plays a role in intracellular vesicle-mediated transport. Involved in the endocytosis of cell-surface receptors like the EGF receptor, contributing to its internalization in the absence of EGF stimulus. The protein is Protein kinase C and casein kinase substrate in neurons protein 2 (pacsin2) of Xenopus laevis (African clawed frog).